The chain runs to 47 residues: Protein PsbN (47 aa).

The helical transmembrane segment at 9-31 (YSLLIAMVTITFGLTGYGLYTAF) threads the bilayer.

Belongs to the PsbN family.

The protein resides in the cellular thylakoid membrane. Functionally, may play a role in photosystem I and II biogenesis. The polypeptide is Protein PsbN (Prochlorococcus marinus (strain MIT 9303)).